Reading from the N-terminus, the 404-residue chain is Type II restriction enzyme EcoRII (404 aa).

Tyr308 is an active-site residue.

In terms of assembly, homodimer. Requires Mg(2+) as cofactor.

The enzyme catalyses Endonucleolytic cleavage of DNA to give specific double-stranded fragments with terminal 5'-phosphates.. Its function is as follows. An E and P subtype restriction enzyme that recognizes the double-stranded sequence 5'-CCWGG-3' and cleaves before C-1. The polypeptide is Type II restriction enzyme EcoRII (ecoRIIR) (Escherichia coli).